A 550-amino-acid chain; its full sequence is Hydroxylamine reductase (550 aa).

[2Fe-2S] cluster is bound by residues cysteine 3, cysteine 6, cysteine 18, and cysteine 25. Hybrid [4Fe-2O-2S] cluster is bound by residues histidine 249, glutamate 273, cysteine 317, cysteine 405, cysteine 433, cysteine 458, glutamate 492, and lysine 494. Cysteine 405 bears the Cysteine persulfide mark.

The protein belongs to the HCP family. It depends on [2Fe-2S] cluster as a cofactor. The cofactor is hybrid [4Fe-2O-2S] cluster.

The protein resides in the cytoplasm. The enzyme catalyses A + NH4(+) + H2O = hydroxylamine + AH2 + H(+). Its function is as follows. Catalyzes the reduction of hydroxylamine to form NH(3) and H(2)O. The chain is Hydroxylamine reductase from Pectobacterium atrosepticum (strain SCRI 1043 / ATCC BAA-672) (Erwinia carotovora subsp. atroseptica).